The primary structure comprises 265 residues: Ni-sirohydrochlorin a,c-diamide reductive cyclase complex, component CfbC (265 aa).

The protein belongs to the NifH/BchL/ChlL family. As to quaternary structure, homodimer. The Ni-sirohydrochlorin a,c-diamide reductive cyclase complex is composed of a NifH homolog component CfbC and a NifD homolog component CfbD. Requires [4Fe-4S] cluster as cofactor.

It catalyses the reaction Ni-sirohydrochlorin a,c-diamide + 3 AH2 + ATP + H2O = 15,17(3)-seco-F430-17(3)-acid + 3 A + ADP + phosphate. Its function is as follows. Involved in the biosynthesis of the unique nickel-containing tetrapyrrole coenzyme F430, the prosthetic group of methyl-coenzyme M reductase (MCR), which plays a key role in methanogenesis and anaerobic methane oxidation. Catalyzes both the six-electron reduction of the tetrahydroporphyrin ring system and the gamma-lactamization of the c-acetamide side chain of Ni-sirohydrochlorin a,c-diamide to yield 15,17(3)-seco-F430-17(3)-acid (seco-F430), the last intermediate in the biosynthesis of the coenzyme F430. In Methanosarcina barkeri (strain Fusaro / DSM 804), this protein is Ni-sirohydrochlorin a,c-diamide reductive cyclase complex, component CfbC.